A 274-amino-acid chain; its full sequence is 2,3,4,5-tetrahydropyridine-2,6-dicarboxylate N-succinyltransferase (274 aa).

Substrate-binding residues include Arg-104 and Asp-141.

The protein belongs to the transferase hexapeptide repeat family. As to quaternary structure, homotrimer.

The protein localises to the cytoplasm. The catalysed reaction is (S)-2,3,4,5-tetrahydrodipicolinate + succinyl-CoA + H2O = (S)-2-succinylamino-6-oxoheptanedioate + CoA. It participates in amino-acid biosynthesis; L-lysine biosynthesis via DAP pathway; LL-2,6-diaminopimelate from (S)-tetrahydrodipicolinate (succinylase route): step 1/3. The protein is 2,3,4,5-tetrahydropyridine-2,6-dicarboxylate N-succinyltransferase of Shigella dysenteriae serotype 1 (strain Sd197).